The sequence spans 225 residues: MQIRWFGHAAFILESGSLKILIDPWISNPLSPVSLQDVKNLKPTHILVTHDHFDHLGDAIDISKATGAPIVGTYELTLEVAEKGIPEAQTLPMNIGGTIKLGDGVEIYMTQALHTANRGAPSGFVIATPEGTVYHAGDTGLFKDMELIAELYDIDVALLPIGSVFTMGPREAAIAVQLLRPKKVVPMHYNTFPLIKQDPEDFKSRVEAISRVKVYLMKPGDTLRI.

It belongs to the UPF0173 family.

The polypeptide is UPF0173 metal-dependent hydrolase Pisl_0803 (Pyrobaculum islandicum (strain DSM 4184 / JCM 9189 / GEO3)).